The chain runs to 132 residues: Small ribosomal subunit protein uS8 (132 aa).

It belongs to the universal ribosomal protein uS8 family. As to quaternary structure, part of the 30S ribosomal subunit. Contacts proteins S5 and S12.

One of the primary rRNA binding proteins, it binds directly to 16S rRNA central domain where it helps coordinate assembly of the platform of the 30S subunit. The polypeptide is Small ribosomal subunit protein uS8 (Christiangramia forsetii (strain DSM 17595 / CGMCC 1.15422 / KT0803) (Gramella forsetii)).